Consider the following 522-residue polypeptide: MPQLDLSWLGLRLETSLPWLLLLLIGASWLLVRVLTQTYIFYRTYQHLCDFPQPPKWNWFLGHLGMITPTEQGLKQVTKLVATYPQGFMTWLGPILPIITLCHPDVIRSVLSASASVALKEVIFYSFLKPWLGDGLLLSDGDKWSCHRRMLTPAFHFNILKPYVKIFNDSTNIMHAKWQDLASGGSARLDMFKNISLMTLDSLQKCVFSFDSNCQEKPSEYISAILELSALVAKRYQQLLLHTDSLYQLTHNGRRFHKACKLVHNFTDAVIQGRRRALPSQHEDDILKAKARSKTLDFIDVLLLTKDEDGKELSDEDIRAEADTFMFEGHDTTASGLSWILYNLARHPEYQERCRQEVRELLRDRESTEIEWDDLAQLPFLTMCIKESLRLHPPVTVISRRCTQDIVLPDGRVIPKGVICIINIFATHHNPTVWPDPEVYDPFRFDPENIKDRSPLAFIPFSAGPRNCIGQTFAMNEMKVALALTLLRFRVLPDDKEPRRKPELILRAEGGLWLRVEPLSTQ.

The next 2 helical transmembrane spans lie at 15 to 35 and 87 to 107; these read TSLP…VRVL and GFMT…PDVI. Glu-328 and Cys-468 together coordinate heme.

This sequence belongs to the cytochrome P450 family. It depends on heme as a cofactor. In terms of tissue distribution, expressed in hepatocytes. High expression in liver and kidney. Lower expression in brain.

The protein localises to the endoplasmic reticulum membrane. The protein resides in the microsome membrane. It catalyses the reaction (5Z,8Z,11Z,14Z)-eicosatetraenoate + reduced [NADPH--hemoprotein reductase] + O2 = 20-hydroxy-(5Z,8Z,11Z,14Z)-eicosatetraenoate + oxidized [NADPH--hemoprotein reductase] + H2O + H(+). It carries out the reaction leukotriene B4 + reduced [NADPH--hemoprotein reductase] + O2 = 20-hydroxy-leukotriene B4 + oxidized [NADPH--hemoprotein reductase] + H2O + H(+). The enzyme catalyses 6-trans-leukotriene B4 + reduced [NADPH--hemoprotein reductase] + O2 = 20-hydroxy-6-trans-leukotriene B4 + oxidized [NADPH--hemoprotein reductase] + H2O + H(+). The catalysed reaction is prostaglandin A1 + reduced [NADPH--hemoprotein reductase] + O2 = 20-hydroxy prostaglandin A1 + oxidized [NADPH--hemoprotein reductase] + H2O + H(+). It catalyses the reaction prostaglandin E1 + reduced [NADPH--hemoprotein reductase] + O2 = 20-hydroxy prostaglandin E1 + oxidized [NADPH--hemoprotein reductase] + H2O + H(+). Functionally, a cytochrome P450 monooxygenase involved in the metabolism of arachidonic acid and its oxygenated derivatives. Mechanistically, uses molecular oxygen inserting one oxygen atom into a substrate, and reducing the second into a water molecule, with two electrons provided by NADPH via cytochrome P450 reductase (CPR; NADPH-ferrihemoprotein reductase). Participates in the conversion of arachidonic acid to omega-hydroxyeicosatetraenoic acid (20-HETE), a signaling molecule acting both as vasoconstrictive and natriuretic with overall effect on arterial blood pressure. Hydroxylates the terminal carbon (omega-hydroxylation) of inflammatory lipid mediators, including prostaglandin (PG) A1, PGE1 and leukotriene B4 (LTB4), and may play a role in inactivation of these oxylipins during the resolution of inflammation. The sequence is that of Cytochrome P450 4F4 from Rattus norvegicus (Rat).